A 79-amino-acid polypeptide reads, in one-letter code: RNA-binding protein Hfq (79 aa).

Residues 10–70 (DVFLNTVRKQ…ISTIMPGQPV (61 aa)) form the Sm domain.

Belongs to the Hfq family. Homohexamer.

In terms of biological role, RNA chaperone that binds small regulatory RNA (sRNAs) and mRNAs to facilitate mRNA translational regulation in response to envelope stress, environmental stress and changes in metabolite concentrations. Also binds with high specificity to tRNAs. The polypeptide is RNA-binding protein Hfq (Bartonella quintana (strain Toulouse) (Rochalimaea quintana)).